The sequence spans 102 residues: NADH-quinone oxidoreductase subunit K 1 (102 aa).

Helical transmembrane passes span 5–25 (LYEV…CVVA), 30–50 (VIMM…TFVG), and 62–82 (VFSL…LAMV).

Belongs to the complex I subunit 4L family. In terms of assembly, NDH-1 is composed of 14 different subunits. Subunits NuoA, H, J, K, L, M, N constitute the membrane sector of the complex.

It is found in the cell inner membrane. The enzyme catalyses a quinone + NADH + 5 H(+)(in) = a quinol + NAD(+) + 4 H(+)(out). Functionally, NDH-1 shuttles electrons from NADH, via FMN and iron-sulfur (Fe-S) centers, to quinones in the respiratory chain. The immediate electron acceptor for the enzyme in this species is believed to be ubiquinone. Couples the redox reaction to proton translocation (for every two electrons transferred, four hydrogen ions are translocated across the cytoplasmic membrane), and thus conserves the redox energy in a proton gradient. The chain is NADH-quinone oxidoreductase subunit K 1 from Citrifermentans bemidjiense (strain ATCC BAA-1014 / DSM 16622 / JCM 12645 / Bem) (Geobacter bemidjiensis).